The sequence spans 119 residues: MSTYTFVLFCLQICLIQNVYSQCLGRVGPGGPPVGPYGGPLGGPGYGPVGYGGCGGYGGSGIGNVAVAGELPVAGSSAVMGQVPVIGAVEFAGPACAVGSVSISGACGPTCGCGGSPYY.

The first 21 residues, 1–21 (MSTYTFVLFCLQICLIQNVYS), serve as a signal peptide directing secretion. Residues 22 to 55 (QCLGRVGPGGPPVGPYGGPLGGPGYGPVGYGGCG) are left arm. Residues 56–103 (GYGGSGIGNVAVAGELPVAGSSAVMGQVPVIGAVEFAGPACAVGSVSI) are central domain. The tract at residues 104-119 (SGACGPTCGCGGSPYY) is right arm.

This sequence belongs to the chorion protein family.

Functionally, this protein is one of many from the eggshell of the silk moth. The polypeptide is Chorion class CA protein ERA.5 (ERA.5) (Bombyx mori (Silk moth)).